We begin with the raw amino-acid sequence, 261 residues long: uncharacterized protein (261 aa).

The first 22 residues, 1-22 (MIHSKKLTLGICLVLLIILIGG), serve as a signal peptide directing secretion. The N-palmitoyl cysteine moiety is linked to residue Cys-23. Cys-23 carries the S-diacylglycerol cysteine lipid modification.

It belongs to the staphylococcal tandem lipoprotein family.

It is found in the cell membrane. This is an uncharacterized protein from Staphylococcus aureus (strain USA300).